Here is a 242-residue protein sequence, read N- to C-terminus: U1 small nuclear ribonucleoprotein C (242 aa).

Residues 3–35 (YLGDYCDVYLTHDSMSVRKAHNSGRNHLRNVVE) form a Matrin-type; degenerate zinc finger. Residues 60 to 242 (GQASSNPMLQ…SSPGPSQEGK (183 aa)) form a disordered region. Pro residues-rich tracts occupy residues 90-107 (MLPPPPPFGMPGAPPGAP), 136-149 (PPMPGDLPPPPLPN), 156-183 (PFPPPNGFPPNFQFPPPGAAGFPPPPIP), and 201-213 (PVPPPGFPLPGAP). Polar residues predominate over residues 231 to 242 (PASSPGPSQEGK).

It belongs to the U1 small nuclear ribonucleoprotein C family. U1 snRNP is composed of the 7 core Sm proteins B/B', D1, D2, D3, E, F and G that assemble in a heptameric protein ring on the Sm site of the small nuclear RNA to form the core snRNP, and at least 3 U1 snRNP-specific proteins U1-70K, U1-A and U1-C. U1-C interacts with U1 snRNA and the 5' splice-site region of the pre-mRNA.

It is found in the nucleus. Component of the spliceosomal U1 snRNP, which is essential for recognition of the pre-mRNA 5' splice-site and the subsequent assembly of the spliceosome. U1-C is directly involved in initial 5' splice-site recognition for both constitutive and regulated alternative splicing. The interaction with the 5' splice-site seems to precede base-pairing between the pre-mRNA and the U1 snRNA. Stimulates commitment or early (E) complex formation by stabilizing the base pairing of the 5' end of the U1 snRNA and the 5' splice-site region. In Ajellomyces capsulatus (strain G186AR / H82 / ATCC MYA-2454 / RMSCC 2432) (Darling's disease fungus), this protein is U1 small nuclear ribonucleoprotein C.